Consider the following 471-residue polypeptide: Pneumolysin (471 aa).

The next 4 beta stranded transmembrane spans lie at 158-171 (MEQLKVKFGSDFEK), 178-187 (IDFNSVHSGE), 256-265 (SDEVEAAFEA), and 273-285 (APQTEWKQILDNT). The Conserved undecapeptide signature appears at 427–437 (ECTGLAWEWWR). The Cholesterol binding motif lies at 459 to 460 (TL).

Belongs to the cholesterol-dependent cytolysin family. Homooligomeric pore complex of 35 to 50 subunits; when inserted in the host membrane. In terms of processing, has a slightly altered apparent molecular weight in a secA2 deletion mutant, but no post-translational modifications have been found.

Its subcellular location is the secreted. The protein resides in the cell wall. It localises to the host cell membrane. In terms of biological role, a cholesterol-dependent toxin that causes cytolysis by forming pores in cholesterol containing host membranes. After binding to target membranes, the protein undergoes a major conformation change, leading to its insertion in the host membrane and formation of an oligomeric pore complex. Cholesterol is required for binding to host membranes, membrane insertion and pore formation; cholesterol binding is mediated by a Thr-Leu pair in the C-terminus. Can be reversibly inactivated by oxidation. This chain is Pneumolysin (ply), found in Streptococcus pneumoniae serotype 4 (strain ATCC BAA-334 / TIGR4).